Here is a 343-residue protein sequence, read N- to C-terminus: Flavone 3'-O-methyltransferase OMT1 (343 aa).

Asparagine 107 contributes to the (E)-ferulate binding site. Positions 184, 207, 227, 228, 240, and 241 each coordinate S-adenosyl-L-homocysteine. Histidine 245 acts as the Proton acceptor in catalysis. Residue aspartate 246 coordinates (E)-5-hydroxyferulate. Residues glutamate 273 and glutamate 305 contribute to the active site.

The protein belongs to the class I-like SAM-binding methyltransferase superfamily. Cation-independent O-methyltransferase family. COMT subfamily. As to quaternary structure, homodimer.

The enzyme catalyses (E)-5-hydroxyferulate + S-adenosyl-L-methionine = (E)-sinapate + S-adenosyl-L-homocysteine + H(+). It catalyses the reaction luteolin + S-adenosyl-L-methionine = chrysoeriol + S-adenosyl-L-homocysteine + H(+). The catalysed reaction is quercetin + S-adenosyl-L-methionine = isorhamnetin + S-adenosyl-L-homocysteine + H(+). It carries out the reaction (E)-caffeate + S-adenosyl-L-methionine = (E)-ferulate + S-adenosyl-L-homocysteine + H(+). The enzyme catalyses a 3'-hydroxyflavone + S-adenosyl-L-methionine = a 3'-methoxyflavone + S-adenosyl-L-homocysteine + H(+). The protein operates within flavonoid metabolism. Catalyzes the 3'-O-methylation of the flavonoids luteolin and quercetin. Catalyzes the 3- of 5-O-methylation of the phenylpropanoids caffeate and 5-hydroxyferulate. Substrate preference is 5-hydroxyferulate &gt; luteolin &gt; quercetin &gt; caffeate. Apigenin, kempferol and 3,4-dimethylquercetin do not seem to be substrates for methylation. This Chrysosplenium americanum (American golden saxifrage) protein is Flavone 3'-O-methyltransferase OMT1.